Here is a 282-residue protein sequence, read N- to C-terminus: Lipoyl synthase (282 aa).

The [4Fe-4S] cluster site is built by C37, C42, C48, C63, C67, C70, and S275. The Radical SAM core domain maps to 49–264 (WSRGTATFMI…RLVGIEKGFR (216 aa)).

It belongs to the radical SAM superfamily. Lipoyl synthase family. It depends on [4Fe-4S] cluster as a cofactor.

It is found in the cytoplasm. It carries out the reaction [[Fe-S] cluster scaffold protein carrying a second [4Fe-4S](2+) cluster] + N(6)-octanoyl-L-lysyl-[protein] + 2 oxidized [2Fe-2S]-[ferredoxin] + 2 S-adenosyl-L-methionine + 4 H(+) = [[Fe-S] cluster scaffold protein] + N(6)-[(R)-dihydrolipoyl]-L-lysyl-[protein] + 4 Fe(3+) + 2 hydrogen sulfide + 2 5'-deoxyadenosine + 2 L-methionine + 2 reduced [2Fe-2S]-[ferredoxin]. It functions in the pathway protein modification; protein lipoylation via endogenous pathway; protein N(6)-(lipoyl)lysine from octanoyl-[acyl-carrier-protein]: step 2/2. In terms of biological role, catalyzes the radical-mediated insertion of two sulfur atoms into the C-6 and C-8 positions of the octanoyl moiety bound to the lipoyl domains of lipoate-dependent enzymes, thereby converting the octanoylated domains into lipoylated derivatives. In Porphyromonas gingivalis (strain ATCC BAA-308 / W83), this protein is Lipoyl synthase.